The following is a 458-amino-acid chain: tRNA modification GTPase MnmE (458 aa).

3 residues coordinate (6S)-5-formyl-5,6,7,8-tetrahydrofolate: arginine 26, glutamate 88, and arginine 127. The TrmE-type G domain occupies 224–378; sequence GLSTAIIGRP…IEERINDIFF (155 aa). Asparagine 234 is a K(+) binding site. GTP-binding positions include 234 to 239, 253 to 259, and 278 to 281; these read NVGKSS, TDIEGTT, and DTAG. Serine 238 contributes to the Mg(2+) binding site. K(+) contacts are provided by threonine 253, isoleucine 255, and threonine 258. Threonine 259 serves as a coordination point for Mg(2+). (6S)-5-formyl-5,6,7,8-tetrahydrofolate is bound at residue lysine 458.

The protein belongs to the TRAFAC class TrmE-Era-EngA-EngB-Septin-like GTPase superfamily. TrmE GTPase family. In terms of assembly, homodimer. Heterotetramer of two MnmE and two MnmG subunits. K(+) is required as a cofactor.

It localises to the cytoplasm. Functionally, exhibits a very high intrinsic GTPase hydrolysis rate. Involved in the addition of a carboxymethylaminomethyl (cmnm) group at the wobble position (U34) of certain tRNAs, forming tRNA-cmnm(5)s(2)U34. In Streptococcus agalactiae serotype Ia (strain ATCC 27591 / A909 / CDC SS700), this protein is tRNA modification GTPase MnmE.